The chain runs to 500 residues: Autophagy-related protein 18 (500 aa).

The WD 1 repeat unit spans residues 3 to 41; it reads DSSPTINFINFNQTGTCISLGTSKGFKIFNCEPFGKFYS. The segment at 174–197 is disordered; it reads VGGNTETSFKRDQQDAGHSDISDL. The segment covering 181-194 has biased composition (basic and acidic residues); that stretch reads SFKRDQQDAGHSDI. 2 WD repeats span residues 243–283 and 288–327; these read AHKG…KIYQ and TYAT…SNNK. Residues 284 to 288 carry the L/FRRG motif motif; it reads FRRGT. A disordered region spans residues 328-358; that stretch reads LDSDDSNMEEAAADDSSLDTTSIDALSDEEN. Acidic residues predominate over residues 331–344; the sequence is DDSNMEEAAADDSS. Residue Ser354 is modified to Phosphoserine.

This sequence belongs to the WD repeat PROPPIN family. In terms of assembly, component of the PI(3,5)P2 regulatory complex, composed of ATG18, FIG4, FAB1, VAC14 and VAC7. VAC14 nucleates the assembly of the complex and serves as a scaffold. Interacts with ATG2, ATG9 and VAC17. The ATG2-ATG18 complex is essential for autophagosome formation.

Its subcellular location is the preautophagosomal structure membrane. It is found in the vacuole membrane. The protein resides in the endosome membrane. In terms of biological role, the PI(3,5)P2 regulatory complex regulates both the synthesis and turnover of phosphatidylinositol 3,5-bisphosphate (PtdIns(3,5)P2). May negatively regulate FAB1 activity by sequestering or masking VAC7 from FAB1. Necessary for proper vacuole morphology. Plays an important role in osmotically-induced vacuole fragmentation. Required for cytoplasm to vacuole transport (Cvt) vesicle formation, pexophagy and starvation-induced autophagy. Involved in correct ATG9 trafficking to the pre-autophagosomal structure. Might also be involved in premeiotic DNA replication. With ATG2, protects ATG8 from ARG4-mediated cleavage. This chain is Autophagy-related protein 18 (ATG18), found in Saccharomyces cerevisiae (strain YJM789) (Baker's yeast).